The following is an 802-amino-acid chain: Cell division cycle 5-like protein (802 aa).

HTH myb-type domains lie at 1 to 56 and 57 to 108; these read MPRI…WLDP and SIKK…DKAA. 2 consecutive DNA-binding regions (H-T-H motif) follow at residues 31–54 and 82–104; these read WSRI…YEWL and WRTI…EFLL. The segment at 108–143 is disordered; sequence AQRDNEEETTDDPRKLKPGEIDPNPETKPARPDPID. Residues 118-127 are compositionally biased toward basic and acidic residues; the sequence is DDPRKLKPGE. Lysine 135 is covalently cross-linked (Glycyl lysine isopeptide (Lys-Gly) (interchain with G-Cter in SUMO2)). Positions 142–245 form a coiled coil; sequence IDMDEDELEM…DADFRKLRQQ (104 aa). Residues 165–271 carry the Nuclear localization signal motif; sequence KKAKRKAREK…KDKQHLKRKK (107 aa). Positions 200–206 are required for interaction with CTNNBL1; sequence KKRKKKR. Residue lysine 219 forms a Glycyl lysine isopeptide (Lys-Gly) (interchain with G-Cter in SUMO2) linkage. Threonine 227 is subject to Phosphothreonine. Over residues 246 to 262 the composition is skewed to basic and acidic residues; sequence DLDGELRSEKEGRDRKK. A disordered region spans residues 246 to 278; sequence DLDGELRSEKEGRDRKKDKQHLKRKKESDLPSA. An interaction with PPP1R8 region spans residues 260–606; sequence RKKDKQHLKR…NKKGKTVGFG (347 aa). 2 positions are modified to phosphoserine: serine 303 and serine 358. Residues threonine 377, threonine 385, threonine 396, threonine 404, threonine 411, and threonine 415 each carry the phosphothreonine modification. Residues 409 to 418 are compositionally biased toward polar residues; the sequence is LSTPFRTPSH. The tract at residues 409–459 is disordered; sequence LSTPFRTPSHGSEGLTPRSGTTPKPVINSTPGRTPLRDKLNINPEDGMADY. Phosphoserine is present on serine 417. Phosphothreonine occurs at positions 424 and 430. Over residues 426–440 the composition is skewed to polar residues; that stretch reads RSGTTPKPVINSTPG. Serine 437 carries the post-translational modification Phosphoserine. Residues threonine 438 and threonine 442 each carry the phosphothreonine modification. Residue lysine 487 forms a Glycyl lysine isopeptide (Lys-Gly) (interchain with G-Cter in SUMO2) linkage. Positions 501 to 659 are interaction with DAPK3; the sequence is ELEEREIDDT…GELSSEAYNQ (159 aa). Coiled-coil stretches lie at residues 676-701 and 764-802; these read RYTR…INRG and PRRL…KAKF. The interval 706–800 is interaction with PLRG1; that stretch reads EAKRAAKMEK…LLLEKETLKA (95 aa).

This sequence belongs to the CEF1 family. In terms of assembly, homodimer. Interacts with DAPK3. Component of the precatalytic, catalytic and postcatalytic spliceosome complexes. Part of a spliceosomal 'core' complex consisting of CDC5L, PLRG1, SPF27, CCAP1, CCAP3 and CCAP6. Interacts with PLRG1, Lodestar/TTF2, and NIPP1/PPP1R8. Component of the minor spliceosome, which splices U12-type introns. Within this complex, interacts with SCNM1. Component of the PRP19-CDC5L splicing complex composed of a core complex comprising a homotetramer of PRPF19, CDC5L, PLRG1 and BCAS2, and at least three less stably associated proteins CTNNBL1, CWC15 and HSPA8. Interacts (via its C-terminus) directly in the complex with PRPF19 and BCAS2. Interacts (via its C-terminus) directly with PRGL1 (via its WD40 repeat domain); the interaction is required for mRNA splicing but not for spliceosome assembly. Also interacts with CTNNBL1. Interacts with PRPF19 (via N-terminus). Interacts with USB1. Interacts with DDX41. Post-translationally, phosphorylated on serine and threonine residues. Phosphorylation on Thr-411 and Thr-438 is required for CDC5L-mediated mRNA splicing. Has no effect on subcellular location nor on homodimerization. Phosphorylated in vitro by CDK2. Phosphorylation enhances interaction with PPP1R8.

Its subcellular location is the nucleus. It localises to the nucleus speckle. The protein resides in the cytoplasm. DNA-binding protein involved in cell cycle control. May act as a transcription activator. Plays a role in pre-mRNA splicing as core component of precatalytic, catalytic and postcatalytic spliceosomal complexes. Component of the PRP19-CDC5L complex that forms an integral part of the spliceosome and is required for activating pre-mRNA splicing. The PRP19-CDC5L complex may also play a role in the response to DNA damage (DDR). As a component of the minor spliceosome, involved in the splicing of U12-type introns in pre-mRNAs. This Bos taurus (Bovine) protein is Cell division cycle 5-like protein (CDC5L).